A 689-amino-acid polypeptide reads, in one-letter code: MADYLLEIGLEEIPAHLVTESENQLIERIKNFFSDNLLDYKKIQTFSTPRRLAVLVHDLSNYSQSKDEELRGPSLKVAKDESGNWSRAAEGFARSQGTSPAEFDERDGYVYLNKHIEGVSAEEILKKIGIEVVEKMKFSTYMKWADFKLEYVRPIRWLVSLLDSKIVPFQILDVKADRFTRGHRFLSGGKISISEAGDYEETLNNAYVIVDAKVRKNSIRNQIRKIADTNDWNLHVDPDLLEEVNNIVEYPTAFAGVFDDKYLNLPEIVLTTSMRDNQRFFYVTNKQGKILPHFISVRNGDSNQIENVVKGNEKVLVARLEDAEFFFEEDQKHNIDFFMKKAERLVFHEKIGTMTEHMKRVEKIAALLANQLAFNDQEKKDLKRAANICKFDLTTAMVGEFAELQGTMAGIYAKIFGENQTVCQALSEQYLPTSSEGDLPKSKVGAMLALADKLDTLFSFFAAGIIPSGSNDPYGLRRAALGIVRIIGQQKWNFSVSKLLHSLKTAVDKHEDGFLIDFADTKEISRKVIEFFLDRIRQQSSDIRYDLLDASTGKVNEGIINYIFKRVRILASHVADPDFRDVIEALTRVQNLAEKNKSNVEIDPELFVTNSEKRLYQLTKDKDPIVLLSKGDHTVYQFLASLKEPINNYFDENMIMDKNPIIKNNRVAQINLLNNLISSLGDLRKVVVK.

It belongs to the class-II aminoacyl-tRNA synthetase family. Tetramer of two alpha and two beta subunits.

It localises to the cytoplasm. It carries out the reaction tRNA(Gly) + glycine + ATP = glycyl-tRNA(Gly) + AMP + diphosphate. This is Glycine--tRNA ligase beta subunit from Oenococcus oeni (strain ATCC BAA-331 / PSU-1).